Reading from the N-terminus, the 410-residue chain is Peptidase T (410 aa).

Residue histidine 79 coordinates Zn(2+). The active site involves aspartate 81. Aspartate 142 is a binding site for Zn(2+). The active-site Proton acceptor is glutamate 176. The Zn(2+) site is built by glutamate 177, aspartate 199, and histidine 381.

It belongs to the peptidase M20B family. Zn(2+) is required as a cofactor.

The protein resides in the cytoplasm. The enzyme catalyses Release of the N-terminal residue from a tripeptide.. Its function is as follows. Cleaves the N-terminal amino acid of tripeptides. The chain is Peptidase T from Bacillus velezensis (strain DSM 23117 / BGSC 10A6 / LMG 26770 / FZB42) (Bacillus amyloliquefaciens subsp. plantarum).